The chain runs to 132 residues: Phosphoribosyl-AMP cyclohydrolase (132 aa).

Aspartate 82 contributes to the Mg(2+) binding site. Cysteine 83 contacts Zn(2+). Aspartate 84 and aspartate 86 together coordinate Mg(2+). Positions 99 and 106 each coordinate Zn(2+).

Belongs to the PRA-CH family. In terms of assembly, homodimer. The cofactor is Mg(2+). Zn(2+) is required as a cofactor.

It is found in the cytoplasm. The enzyme catalyses 1-(5-phospho-beta-D-ribosyl)-5'-AMP + H2O = 1-(5-phospho-beta-D-ribosyl)-5-[(5-phospho-beta-D-ribosylamino)methylideneamino]imidazole-4-carboxamide. It participates in amino-acid biosynthesis; L-histidine biosynthesis; L-histidine from 5-phospho-alpha-D-ribose 1-diphosphate: step 3/9. Catalyzes the hydrolysis of the adenine ring of phosphoribosyl-AMP. This Paramagnetospirillum magneticum (strain ATCC 700264 / AMB-1) (Magnetospirillum magneticum) protein is Phosphoribosyl-AMP cyclohydrolase.